A 183-amino-acid chain; its full sequence is ATP synthase subunit delta (183 aa).

Belongs to the ATPase delta chain family. In terms of assembly, F-type ATPases have 2 components, F(1) - the catalytic core - and F(0) - the membrane proton channel. F(1) has five subunits: alpha(3), beta(3), gamma(1), delta(1), epsilon(1). F(0) has three main subunits: a(1), b(2) and c(10-14). The alpha and beta chains form an alternating ring which encloses part of the gamma chain. F(1) is attached to F(0) by a central stalk formed by the gamma and epsilon chains, while a peripheral stalk is formed by the delta and b chains.

Its subcellular location is the cell inner membrane. In terms of biological role, f(1)F(0) ATP synthase produces ATP from ADP in the presence of a proton or sodium gradient. F-type ATPases consist of two structural domains, F(1) containing the extramembraneous catalytic core and F(0) containing the membrane proton channel, linked together by a central stalk and a peripheral stalk. During catalysis, ATP synthesis in the catalytic domain of F(1) is coupled via a rotary mechanism of the central stalk subunits to proton translocation. This protein is part of the stalk that links CF(0) to CF(1). It either transmits conformational changes from CF(0) to CF(1) or is implicated in proton conduction. This chain is ATP synthase subunit delta, found in Rickettsia prowazekii (strain Madrid E).